The sequence spans 1331 residues: NPC1-like intracellular cholesterol transporter 1 (1331 aa).

Positions 1–20 are cleaved as a signal peptide; it reads MAAAWLGWLLWALLLSAAQG. The Extracellular portion of the chain corresponds to 21 to 282; the sequence is ELYTPKHEAG…RPSFYMGRMP (262 aa). 9 disulfides stabilise this stretch: cysteine 32–cysteine 90, cysteine 38–cysteine 56, cysteine 77–cysteine 125, cysteine 91–cysteine 129, cysteine 113–cysteine 254, cysteine 116–cysteine 172, cysteine 189–cysteine 197, cysteine 243–cysteine 259, and cysteine 256–cysteine 263. N-linked (GlcNAc...) asparagine glycans are attached at residues asparagine 53 and asparagine 85. Asparagine 138 carries an N-linked (GlcNAc...) asparagine glycan. Residue asparagine 244 is glycosylated (N-linked (GlcNAc...) asparagine). A helical membrane pass occupies residues 283–303; the sequence is GWLALIIIFTAVFVLLSAVLV. Residues 304–352 are Cytoplasmic-facing; sequence RLRVVSNRNKNKAEGPQEAPKLPHKHKLSPHTILGRFFQNWGTRVASWP. Residues 353 to 373 traverse the membrane as a helical segment; that stretch reads LTVLALSFIVVIALAAGLTFI. Residues 374–632 lie on the Extracellular side of the membrane; the sequence is ELTTDPVELW…DEINRTTIQD (259 aa). Asparagine 416, asparagine 431, asparagine 464, asparagine 479, asparagine 497, and asparagine 506 each carry an N-linked (GlcNAc...) asparagine glycan. The cysteines at positions 471 and 485 are disulfide-linked. Cysteines 525 and 542 form a disulfide. Residues asparagine 606 and asparagine 626 are each glycosylated (N-linked (GlcNAc...) asparagine). The SSD domain occupies 632-797; that stretch reads DLPVFAVSYI…MTAFVALLSL (166 aa). The chain crosses the membrane as a helical span at residues 633-653; that stretch reads LPVFAVSYIIVFLYISLALGS. Over 654–665 the chain is Cytoplasmic; that stretch reads YSRCSRVAVESK. Residues 666-686 traverse the membrane as a helical segment; sequence ATLGLGGVIVVLGAVLAAMGF. At 687–696 the chain is on the extracellular side; the sequence is YSYLGVPSSL. Residues 697 to 717 traverse the membrane as a helical segment; the sequence is VIIQVVPFLVLAVGADNIFIF. Over 718–742 the chain is Cytoplasmic; the sequence is VLEYQRLPRMPGEQREAHIGRTLGS. The chain crosses the membrane as a helical span at residues 743 to 763; that stretch reads VAPSMLLCSLSEAICFFLGAL. Topologically, residues 764 to 776 are extracellular; sequence TPMPAVRTFALTS. The chain crosses the membrane as a helical span at residues 777–797; the sequence is GLAIILDFLLQMTAFVALLSL. At 798 to 846 the chain is on the cytoplasmic side; the sequence is DSKRQEASRPDVLCCFSTRKLPPPKEKEGLLLRFFRKIYAPFLLHRFIR. Residues 847 to 867 traverse the membrane as a helical segment; it reads PVVMLLFLTLFGANLYLMCNI. Residues 868–1113 lie on the Extracellular side of the membrane; it reads NVGLDQELAL…QQYLTVLPEG (246 aa). N-linked (GlcNAc...) asparagine glycosylation is found at asparagine 909 and asparagine 917. 3 disulfides stabilise this stretch: cysteine 920/cysteine 925, cysteine 967/cysteine 1025, and cysteine 981/cysteine 990. 3 N-linked (GlcNAc...) asparagine glycosylation sites follow: asparagine 996, asparagine 1038, and asparagine 1076. A helical membrane pass occupies residues 1114 to 1134; sequence IFTLALCFVPTFVVCYLLLGL. Topologically, residues 1135 to 1142 are cytoplasmic; sequence DMCSGILN. Residues 1143 to 1163 traverse the membrane as a helical segment; that stretch reads LLSIIMILVDTIGLMAVWGIS. The Extracellular portion of the chain corresponds to 1164-1165; it reads YN. The helical transmembrane segment at 1166 to 1186 threads the bilayer; sequence AVSLINLVTAVGMSVEFVSHI. Over 1187-1206 the chain is Cytoplasmic; that stretch reads TRSFAVSTKPTRLERAKDAT. The chain crosses the membrane as a helical span at residues 1207 to 1227; that stretch reads VFMGSAVFAGVAMTNFPGILI. Residues 1228 to 1242 are Extracellular-facing; that stretch reads LGFAQAQLIQIFFFR. The chain crosses the membrane as a helical span at residues 1243 to 1263; sequence LNLLITLLGLLHGLVFLPVVL. The Cytoplasmic segment spans residues 1264–1331; it reads SYLGPDVNQA…SSLPKSDQKF (68 aa).

The protein belongs to the patched family. In terms of assembly, interacts with RAB11A, MYO5B and RAB11FIP2. Interaction with RAB11A, MYO5B and RAB11FIP2 is required for proper transport to the plasma membrane upon cholesterol depletion. Interacts with NPC2. Interacts with LIMA1. Highly glycosylated. As to expression, small intestine showed the highest level of expression. Expression in other tissues including gall bladder, liver, testis and stomach is also observed. Along the duodenum-ileum axis, the levels vary in different segments of the intestine with peak expression in the proximal jejunum. Protein expression is confined to the enterocyte. Discrete localization to the epithelial layer bordering the luminal space along the crypt-villus axis. Protein expression in the enterocyte is observed closest to the luminal space. Expression in enterocytes from the proximal (jejunum) but not in the distal (ileum) region.

The protein localises to the apical cell membrane. The protein resides in the cell membrane. The enzyme catalyses cholesterol(in) = cholesterol(out). The catalysed reaction is sitosterol(out) = sitosterol(in). In terms of biological role, plays a major role in cholesterol homeostasis. Critical for the uptake of cholesterol across the plasma membrane of the intestinal enterocyte. Involved in plant sterol absorption, it transports sitosterol, although at lower rates than cholesterol. Is the direct molecular target of ezetimibe, a drug that inhibits cholesterol absorption and is approved for the treatment of hypercholesterolemia. May have a function in the transport of multiple lipids and their homeostasis, thereby influencing lipid metabolism regulation. May be involved in caveolin trafficking from the plasma membrane. Acts as a negative regulator of NPC2 and down-regulates its expression and secretion by inhibiting its maturation and accelerating its degradation. In Rattus norvegicus (Rat), this protein is NPC1-like intracellular cholesterol transporter 1.